Here is a 282-residue protein sequence, read N- to C-terminus: 4-diphosphocytidyl-2-C-methyl-D-erythritol kinase (282 aa).

Lys12 is a catalytic residue. Pro95–Ser105 contributes to the ATP binding site. Asp137 is a catalytic residue.

This sequence belongs to the GHMP kinase family. IspE subfamily.

It catalyses the reaction 4-CDP-2-C-methyl-D-erythritol + ATP = 4-CDP-2-C-methyl-D-erythritol 2-phosphate + ADP + H(+). It participates in isoprenoid biosynthesis; isopentenyl diphosphate biosynthesis via DXP pathway; isopentenyl diphosphate from 1-deoxy-D-xylulose 5-phosphate: step 3/6. Functionally, catalyzes the phosphorylation of the position 2 hydroxy group of 4-diphosphocytidyl-2C-methyl-D-erythritol. The polypeptide is 4-diphosphocytidyl-2-C-methyl-D-erythritol kinase (Pseudomonas aeruginosa (strain UCBPP-PA14)).